A 372-amino-acid chain; its full sequence is MNSGIDLQGTFIKSLMDLGIPPGTAKAIWMPLPMILMLIGATVGVLVCVWLERKISAAAQQRIGPEYIGPLGLLAPVADGLKLVFKEDIVPAQADPWLFTLGPILVVLPVFLSYLIVPFGQNIVITNIGTGIFLWIALSSIQPIGLLMAGYSSNNKYSLLGGLRAAAQSISYEIPLALSVLAIVMMSNSLSTVDIVNQQSGYGILGWNIWRQPLGFLIFWIAALAECERLPFDLPEAEEELVAGYQTEYSGMKFALFYLSSYVNLVLSALLVAVLYLGGWDFPIPINVLANLVGVSEANPVLQVVSAALGITMTLVKAYFLVFIAILLRWTVPRVRIDQLLDLGWKFLLPVGLVNLLLTAALKLAFPVAFGG.

The next 9 membrane-spanning stretches (helical) occupy residues Ala27–Val47, Pro65–Phe85, Trp97–Val117, Ile128–Met148, Ala166–Met186, Ile204–Leu224, Val266–Ile286, Ala308–Leu328, and Phe347–Pro367.

Belongs to the complex I subunit 1 family. As to quaternary structure, NDH-1 is composed of at least 11 different subunits.

The protein localises to the cellular thylakoid membrane. It catalyses the reaction a plastoquinone + NADH + (n+1) H(+)(in) = a plastoquinol + NAD(+) + n H(+)(out). The catalysed reaction is a plastoquinone + NADPH + (n+1) H(+)(in) = a plastoquinol + NADP(+) + n H(+)(out). Functionally, NDH-1 shuttles electrons from an unknown electron donor, via FMN and iron-sulfur (Fe-S) centers, to quinones in the respiratory and/or the photosynthetic chain. The immediate electron acceptor for the enzyme in this species is believed to be plastoquinone. Couples the redox reaction to proton translocation, and thus conserves the redox energy in a proton gradient. In Trichormus variabilis (strain ATCC 29413 / PCC 7937) (Anabaena variabilis), this protein is NAD(P)H-quinone oxidoreductase subunit 1.